The sequence spans 452 residues: tRNA-2-methylthio-N(6)-dimethylallyladenosine synthase (452 aa).

The MTTase N-terminal domain occupies 16–134; it reads KRFFISTWGC…LPEYIERVKT (119 aa). 6 residues coordinate [4Fe-4S] cluster: Cys25, Cys61, Cys95, Cys171, Cys175, and Cys178. Residues 157–387 enclose the Radical SAM core domain; it reads RKSDIKAFVT…VEAVNEIMAR (231 aa). In terms of domain architecture, TRAM spans 390–452; it reads KEFEGKTVEV…NSFSLTGEII (63 aa).

Belongs to the methylthiotransferase family. MiaB subfamily. In terms of assembly, monomer. The cofactor is [4Fe-4S] cluster.

The protein resides in the cytoplasm. It catalyses the reaction N(6)-dimethylallyladenosine(37) in tRNA + (sulfur carrier)-SH + AH2 + 2 S-adenosyl-L-methionine = 2-methylsulfanyl-N(6)-dimethylallyladenosine(37) in tRNA + (sulfur carrier)-H + 5'-deoxyadenosine + L-methionine + A + S-adenosyl-L-homocysteine + 2 H(+). Catalyzes the methylthiolation of N6-(dimethylallyl)adenosine (i(6)A), leading to the formation of 2-methylthio-N6-(dimethylallyl)adenosine (ms(2)i(6)A) at position 37 in tRNAs that read codons beginning with uridine. The chain is tRNA-2-methylthio-N(6)-dimethylallyladenosine synthase from Clostridium novyi (strain NT).